Reading from the N-terminus, the 605-residue chain is MILHHLLILLIINYCVATSPTNGYAPGPVSCPSSQLIRSGSQGINPNEQSYINARYPIAKQALSKFLHNANLQNFDVDSFLAHSNPTIGLAFSGGGYRAMLTGAGEISSLDSRTKTNTPVLAGILQASSYIAGLSGGSWLVGSLASNNLNSVDDMLSQGLWELTHSFLSYYGIEHPIKQVEEWVNVGNQVASKRNANFNVSLTDIYGRLLSYPLLTNTEDEGDAYLWSDVTSASNFQSHQMPFPILISDGRAPDTTIINLNSTVIELTPYEFGSWDPSLNEFVDTRYLGTKLDNGRPTGKCYNGFDNAGFFMGTSSALFNEAVLSITEANIPSFLKDIIDDILVDPILKSNIDVSAYNPNPFFKSSGSNTAISQSKNLYLVDGGEDGQNIPISPLLHRNVSAIFAFDNSNDVLNWPDGTSLVKTYERQFSSQGNGIAFPYVPDQYTFRNLNLTSKPTFFGCDAKNLTSLTKDIYDVPLVIYLANRPFTYWSNTSTFKLTYDDNERQGMISNGFEIATRSSGSLDDEWAACVGCAIIRREQERQGIEQTEQCKRCFENYCWDGTIYKGEPLGENFSDDGLTNSATEYNSNNVAGFNDGGTSILKKA.

The first 17 residues, 1–17 (MILHHLLILLIINYCVA), serve as a signal peptide directing secretion. Positions 30 to 565 (SCPSSQLIRS…ENYCWDGTIY (536 aa)) constitute a PLA2c domain. N199, N261, N399, N451, N465, N492, and N573 each carry an N-linked (GlcNAc...) asparagine glycan.

This sequence belongs to the lysophospholipase family.

The protein resides in the secreted. It catalyses the reaction a 1-acyl-sn-glycero-3-phosphocholine + H2O = sn-glycerol 3-phosphocholine + a fatty acid + H(+). Its function is as follows. Catalyzes the release of fatty acids from lysophospholipids. Phospholipase B may well contribute to pathogenicity by abetting the fungus in damaging and traversing host cell membranes, processes which likely increase the rapidity of disseminated infection. In Candida albicans (strain SC5314 / ATCC MYA-2876) (Yeast), this protein is Lysophospholipase 1.